The chain runs to 335 residues: GTPase Obg (335 aa).

Residues 1-159 form the Obg domain; it reads MKFVDSAKIS…YELEMELKLM (159 aa). The region spanning 160-323 is the OBG-type G domain; that stretch reads ADVGLVGFPN…LKDELWRQVS (164 aa). GTP is bound by residues 166–173, 191–195, 213–216, 280–283, and 304–306; these read GFPNAGKS, FTTLV, DIPG, TKMD, and SSV. Mg(2+)-binding residues include Ser-173 and Thr-193.

Belongs to the TRAFAC class OBG-HflX-like GTPase superfamily. OBG GTPase family. In terms of assembly, monomer. Requires Mg(2+) as cofactor.

The protein localises to the cytoplasm. In terms of biological role, an essential GTPase which binds GTP, GDP and possibly (p)ppGpp with moderate affinity, with high nucleotide exchange rates and a fairly low GTP hydrolysis rate. Plays a role in control of the cell cycle, stress response, ribosome biogenesis and in those bacteria that undergo differentiation, in morphogenesis control. This is GTPase Obg from Chlorobaculum tepidum (strain ATCC 49652 / DSM 12025 / NBRC 103806 / TLS) (Chlorobium tepidum).